Reading from the N-terminus, the 475-residue chain is Glycogen synthase (475 aa).

Lys15 lines the ADP-alpha-D-glucose pocket.

This sequence belongs to the glycosyltransferase 1 family. Bacterial/plant glycogen synthase subfamily.

The catalysed reaction is [(1-&gt;4)-alpha-D-glucosyl](n) + ADP-alpha-D-glucose = [(1-&gt;4)-alpha-D-glucosyl](n+1) + ADP + H(+). Its pathway is glycan biosynthesis; glycogen biosynthesis. In terms of biological role, synthesizes alpha-1,4-glucan chains using ADP-glucose. The protein is Glycogen synthase of Anaeromyxobacter sp. (strain Fw109-5).